The following is a 644-amino-acid chain: uncharacterized protein (644 aa).

Residues 1 to 35 (MKANGLDNDPARTGMERTDIDSEHPEAQPLLNNNH) are disordered. At 1–90 (MKANGLDNDP…ILNILILINT (90 aa)) the chain is on the cytoplasmic side. Basic and acidic residues predominate over residues 14-26 (GMERTDIDSEHPE). 3 positions are modified to phosphoserine: Ser22, Ser56, and Ser63. A helical transmembrane segment spans residues 91–111 (IWLVTTLISDFFFNINILFGF). Residues 112–122 (SNRYASFNDLT) are Vacuolar-facing. A helical transmembrane segment spans residues 123–143 (LIFISIIANSFNLWFNKLGLY). Residues 144–147 (SALD) lie on the Cytoplasmic side of the membrane. Residues 148-168 (YSLNVTLCVLTLFNLALTYLI) traverse the membrane as a helical segment. The Vacuolar segment spans residues 169-174 (KYTRQR). Residues 175 to 195 (IGFVGTFTYLWTSFSFFIGAI) traverse the membrane as a helical segment. The Cytoplasmic segment spans residues 196 to 271 (LDWYLLFYNN…EWVSIGFRNT (76 aa)). The disordered stretch occupies residues 225–251 (NENHTNSTENRDRSQYGSGSPTPTHRS). Positions 239-251 (QYGSGSPTPTHRS) are enriched in polar residues. Ser244 carries the phosphoserine modification. A helical membrane pass occupies residues 272 to 292 (IKFLILIFFALFTLNTLLTTL). Over 293–644 (DTYRLTHKLP…IGELGKLTED (352 aa)) the chain is Vacuolar. In terms of domain architecture, AB hydrolase-1 spans 348-619 (PIILFEHGGY…IVEGGHEIYK (272 aa)). The segment at 469–492 (GRGDGDDGDDGNGNDGDGRNHDKT) is disordered.

The protein localises to the vacuole membrane. This is an uncharacterized protein from Saccharomyces cerevisiae (strain ATCC 204508 / S288c) (Baker's yeast).